A 431-amino-acid chain; its full sequence is Levansucrase LscB (431 aa).

Sucrose contacts are provided by Trp61, Asp62, Ala148, Arg218, and Asp219. The Nucleophile role is filled by Asp62. Glu303 acts as the Proton donor/acceptor in catalysis.

It belongs to the glycosyl hydrolase 68 family.

The protein resides in the secreted. The catalysed reaction is [6)-beta-D-fructofuranosyl-(2-&gt;](n) alpha-D-glucopyranoside + sucrose = [6)-beta-D-fructofuranosyl-(2-&gt;](n+1) alpha-D-glucopyranoside + D-glucose. In terms of biological role, catalyzes the synthesis of levan, a fructose polymer, by transferring the fructosyl moiety from sucrose to a growing acceptor molecule. The polypeptide is Levansucrase LscB (Pseudomonas savastanoi pv. glycinea (Pseudomonas syringae pv. glycinea)).